A 228-amino-acid chain; its full sequence is Cutinase CUT1 (228 aa).

The signal sequence occupies residues 1–16; it reads MQFITVALTLIALASA. The cysteines at positions 49 and 127 are disulfide-linked. Ser138 serves as the catalytic Nucleophile. Cys189 and Cys196 are oxidised to a cystine. Asn190 carries an N-linked (GlcNAc...) asparagine glycan. Asp193 is a catalytic residue. The active-site Proton donor/acceptor is His206.

It belongs to the cutinase family. Post-translationally, the 2 disulfide bonds play a critical role in holding the catalytic residues in juxta-position; reduction of the disulfide bridges results in the complete inactivation of the enzyme.

Its subcellular location is the secreted. The enzyme catalyses cutin + H2O = cutin monomers.. In terms of biological role, catalyzes the hydrolysis of complex carboxylic polyesters found in the cell wall of plants. Degrades cutin, a macromolecule that forms the structure of the plant cuticle. Required for efficient penetration of the host plant cuticle by the appressorium during the initial stage of fungal infection. The polypeptide is Cutinase CUT1 (Pyricularia oryzae (strain 70-15 / ATCC MYA-4617 / FGSC 8958) (Rice blast fungus)).